The sequence spans 440 residues: Transposon Ty1-ER2 Gag polyprotein (440 aa).

Composition is skewed to polar residues over residues 1–10, 48–60, and 127–152; these read MESQQLSNYP, TKANSQQTTTPAS, and QSQFPQYPSSVGTPLSTPSPESGNTF. Disordered regions lie at residues 1–93, 126–173, and 352–440; these read MESQ…MMTQ, PQSQ…RPPP, and GSRN…PETY. Residues 153–165 are compositionally biased toward low complexity; it reads TDSSSADSDMTST. Residues 299 to 401 are RNA-binding; it reads NNGIHINNKV…NSKSKTARAH (103 aa). A compositionally biased stretch (low complexity) spans 402-418; it reads NVSTSNNSPSTDNDSIS. Ser-416 is subject to Phosphoserine. Polar residues predominate over residues 419 to 428; it reads KSTTEPIQLN. The segment covering 429–440 has biased composition (basic and acidic residues); that stretch reads NKHDLHLRPETY.

In terms of assembly, homotrimer.

It is found in the cytoplasm. Functionally, capsid protein (CA) is the structural component of the virus-like particle (VLP), forming the shell that encapsulates the retrotransposons dimeric RNA genome. The particles are assembled from trimer-clustered units and there are holes in the capsid shells that allow for the diffusion of macromolecules. CA also has nucleocapsid-like chaperone activity, promoting primer tRNA(i)-Met annealing to the multipartite primer-binding site (PBS), dimerization of Ty1 RNA and initiation of reverse transcription. This Saccharomyces cerevisiae (strain ATCC 204508 / S288c) (Baker's yeast) protein is Transposon Ty1-ER2 Gag polyprotein (TY1A-ER2).